A 370-amino-acid chain; its full sequence is DNA replication and repair protein RecF (370 aa).

An ATP-binding site is contributed by 30–37 (GENAQGKT).

It belongs to the RecF family.

The protein resides in the cytoplasm. In terms of biological role, the RecF protein is involved in DNA metabolism; it is required for DNA replication and normal SOS inducibility. RecF binds preferentially to single-stranded, linear DNA. It also seems to bind ATP. This chain is DNA replication and repair protein RecF, found in Bacillus pumilus (strain SAFR-032).